The primary structure comprises 154 residues: 6,7-dimethyl-8-ribityllumazine synthase (154 aa).

5-amino-6-(D-ribitylamino)uracil is bound by residues phenylalanine 22, 56–58 (AFE), and 80–82 (AVI). 85–86 (AT) serves as a coordination point for (2S)-2-hydroxy-3-oxobutyl phosphate. Histidine 88 functions as the Proton donor in the catalytic mechanism. Position 113 (phenylalanine 113) interacts with 5-amino-6-(D-ribitylamino)uracil. (2S)-2-hydroxy-3-oxobutyl phosphate is bound at residue arginine 127.

Belongs to the DMRL synthase family. In terms of assembly, forms an icosahedral capsid composed of 60 subunits, arranged as a dodecamer of pentamers.

It catalyses the reaction (2S)-2-hydroxy-3-oxobutyl phosphate + 5-amino-6-(D-ribitylamino)uracil = 6,7-dimethyl-8-(1-D-ribityl)lumazine + phosphate + 2 H2O + H(+). Its pathway is cofactor biosynthesis; riboflavin biosynthesis; riboflavin from 2-hydroxy-3-oxobutyl phosphate and 5-amino-6-(D-ribitylamino)uracil: step 1/2. Its function is as follows. Catalyzes the formation of 6,7-dimethyl-8-ribityllumazine by condensation of 5-amino-6-(D-ribitylamino)uracil with 3,4-dihydroxy-2-butanone 4-phosphate. This is the penultimate step in the biosynthesis of riboflavin. This is 6,7-dimethyl-8-ribityllumazine synthase from Geobacillus sp. (strain WCH70).